We begin with the raw amino-acid sequence, 1059 residues long: Isoleucine--tRNA ligase (1059 aa).

Residues 59 to 69 carry the 'HIGH' region motif; sequence PFANGLPHYGH. Residues 637–641 carry the 'KMSKS' region motif; that stretch reads KMSKS. K640 lines the ATP pocket.

This sequence belongs to the class-I aminoacyl-tRNA synthetase family. IleS type 2 subfamily. As to quaternary structure, monomer. Zn(2+) is required as a cofactor.

The protein localises to the cytoplasm. It carries out the reaction tRNA(Ile) + L-isoleucine + ATP = L-isoleucyl-tRNA(Ile) + AMP + diphosphate. Its function is as follows. Catalyzes the attachment of isoleucine to tRNA(Ile). As IleRS can inadvertently accommodate and process structurally similar amino acids such as valine, to avoid such errors it has two additional distinct tRNA(Ile)-dependent editing activities. One activity is designated as 'pretransfer' editing and involves the hydrolysis of activated Val-AMP. The other activity is designated 'posttransfer' editing and involves deacylation of mischarged Val-tRNA(Ile). In Mycobacterium leprae (strain TN), this protein is Isoleucine--tRNA ligase.